We begin with the raw amino-acid sequence, 541 residues long: Cytochrome P450 monooxygenase claW (541 aa).

Residues 12 to 32 form a helical membrane-spanning segment; that stretch reads VINALVILFSFWAFLSLIRVI. A heme-binding site is contributed by C480.

This sequence belongs to the cytochrome P450 family. The cofactor is heme.

It localises to the membrane. The protein operates within secondary metabolite biosynthesis; terpenoid biosynthesis. In terms of biological role, cytochrome P450 monooxygenase; part of the gene cluster that mediates the biosynthesis of clavilactone A, a meroterpenoid that features a unique benzo-fused ten-membered carbocyclic ring unit with an alpha,beta-epoxy-gamma-lactone moiety, forming an intriguing 10/5/3 tricyclic nested skeleton. Cytochrome P450 monooxygenases claO, claP, claQ, claU, and claW are close orthologs, suggesting that a redundant function or pseudogenes are present in the cla cluster. These monoxygenases are not involved in clavilactone A biosynthesis nor its modification. ClaR, ClaS and ClaT are sufficient to produce clavilactone A. The biosynthesis begins with the prenyltransferase claS that transfers geranyl pyrophosphate (GPP) to hydroquinone to produces geranylhydroquinone. The cytochrome P450 monooxygenase claR then catalyzes the diradical coupling reaction between the intramolecular hydroquinone and allyl moieties to form the benzo-fused ten-membered carbocyclic ring unit of wigantol. Finally the cytochrome P450 monooxygenase claT exquisitely and stereoselectively assembles the alpha,beta-epoxy-gamma-lactone moiety, producing clavilactone A via arnebinol A. The protein is Cytochrome P450 monooxygenase claW of Ampulloclitocybe clavipes (Club foot).